The primary structure comprises 299 residues: Deoxyribonuclease-1-like 2 (299 aa).

The first 20 residues, 1 to 20 (MGGPRALLAALWALEAAGTA), serve as a signal peptide directing secretion. Residues Glu99 and His170 contribute to the active site. Cys209 and Cys245 are joined by a disulfide.

This sequence belongs to the DNase I family. Requires Mg(2+) as cofactor. Ca(2+) is required as a cofactor. Preferentially expressed in the skin and up-regulated during keratinocytes differentiation. Highly abundant (at protein level) in the stratum granulosum.

It localises to the cytoplasm. Its subcellular location is the secreted. Divalent cation-dependent acid DNA endonuclease involved in the breakdown of the nucleus during corneocyte formation of epidermal keratinocytes. May play an immune role by eliminating harmful DNA released into the extracellular environment by damaged epidermal cells. This Homo sapiens (Human) protein is Deoxyribonuclease-1-like 2 (DNASE1L2).